The sequence spans 317 residues: MQILLANPRGFCAGVDRAISIVERALEIYGAPIYVRHEVVHNRYVVNDLRERGAIFIEEISEVPDNAILIFSAHGVSQAIRQEARSRNLTMLFDATCPLVTKVHMEVARASRKGKEAILIGHAGHPEVEGTMGQYNNPEGGMYLVESPDDVWKLKVKDEDNLCFMTQTTLSVDDTSEVIDALNKRFPKIIGPRKDDICYATTNRQEAARELAERADVVFVVGSKNSSNSNRLAELAQRAGKPSYLIDSAEDIDEIWVSHANIVGVTAGASAPDILVQQVLARLKAFGAEEVIELSGREENIVFEVPKELRLDYKVVE.

Cysteine 12 contacts [4Fe-4S] cluster. (2E)-4-hydroxy-3-methylbut-2-enyl diphosphate-binding residues include histidine 41 and histidine 74. Positions 41 and 74 each coordinate dimethylallyl diphosphate. Residues histidine 41 and histidine 74 each coordinate isopentenyl diphosphate. Cysteine 97 serves as a coordination point for [4Fe-4S] cluster. Histidine 125 provides a ligand contact to (2E)-4-hydroxy-3-methylbut-2-enyl diphosphate. Histidine 125 serves as a coordination point for dimethylallyl diphosphate. Residue histidine 125 coordinates isopentenyl diphosphate. The active-site Proton donor is glutamate 127. Threonine 168 is a binding site for (2E)-4-hydroxy-3-methylbut-2-enyl diphosphate. Position 198 (cysteine 198) interacts with [4Fe-4S] cluster. (2E)-4-hydroxy-3-methylbut-2-enyl diphosphate contacts are provided by serine 226, serine 227, asparagine 228, and serine 270. Dimethylallyl diphosphate contacts are provided by serine 226, serine 227, asparagine 228, and serine 270. Serine 226, serine 227, asparagine 228, and serine 270 together coordinate isopentenyl diphosphate.

This sequence belongs to the IspH family. In terms of assembly, homodimer. [4Fe-4S] cluster serves as cofactor.

It catalyses the reaction isopentenyl diphosphate + 2 oxidized [2Fe-2S]-[ferredoxin] + H2O = (2E)-4-hydroxy-3-methylbut-2-enyl diphosphate + 2 reduced [2Fe-2S]-[ferredoxin] + 2 H(+). The enzyme catalyses dimethylallyl diphosphate + 2 oxidized [2Fe-2S]-[ferredoxin] + H2O = (2E)-4-hydroxy-3-methylbut-2-enyl diphosphate + 2 reduced [2Fe-2S]-[ferredoxin] + 2 H(+). Its pathway is isoprenoid biosynthesis; dimethylallyl diphosphate biosynthesis; dimethylallyl diphosphate from (2E)-4-hydroxy-3-methylbutenyl diphosphate: step 1/1. It functions in the pathway isoprenoid biosynthesis; isopentenyl diphosphate biosynthesis via DXP pathway; isopentenyl diphosphate from 1-deoxy-D-xylulose 5-phosphate: step 6/6. Catalyzes the conversion of 1-hydroxy-2-methyl-2-(E)-butenyl 4-diphosphate (HMBPP) into a mixture of isopentenyl diphosphate (IPP) and dimethylallyl diphosphate (DMAPP). Acts in the terminal step of the DOXP/MEP pathway for isoprenoid precursor biosynthesis. The chain is 4-hydroxy-3-methylbut-2-enyl diphosphate reductase from Proteus mirabilis (strain HI4320).